Reading from the N-terminus, the 275-residue chain is tRNA pseudouridine synthase A (275 aa).

Catalysis depends on aspartate 56, which acts as the Nucleophile. Substrate is bound at residue tyrosine 109.

It belongs to the tRNA pseudouridine synthase TruA family.

The enzyme catalyses uridine(38/39/40) in tRNA = pseudouridine(38/39/40) in tRNA. Formation of pseudouridine at positions 38, 39 and 40 in the anticodon stem and loop of transfer RNAs. In Methanothermobacter thermautotrophicus (strain ATCC 29096 / DSM 1053 / JCM 10044 / NBRC 100330 / Delta H) (Methanobacterium thermoautotrophicum), this protein is tRNA pseudouridine synthase A.